The primary structure comprises 164 residues: Siroheme decarboxylase alpha subunit (164 aa).

It belongs to the Ahb/Nir family. Forms a heterodimer composed of AhbA and AhbB.

The enzyme catalyses siroheme + 2 H(+) = 12,18-didecarboxysiroheme + 2 CO2. It participates in porphyrin-containing compound metabolism; protoheme biosynthesis. Functionally, involved in siroheme-dependent heme b biosynthesis. Catalyzes the decarboxylation of siroheme into didecarboxysiroheme. This chain is Siroheme decarboxylase alpha subunit, found in Oleidesulfovibrio alaskensis (strain ATCC BAA-1058 / DSM 17464 / G20) (Desulfovibrio alaskensis).